The chain runs to 341 residues: Outer membrane protein U (341 aa).

An N-terminal signal peptide occupies residues 1–21 (MNKTLIALAVSAAAVATGAYA).

This sequence belongs to the Gram-negative porin family. Homotrimer.

The protein localises to the cell outer membrane. Functionally, forms pores that allow passive diffusion of small molecules across the outer membrane. The polypeptide is Outer membrane protein U (ompU) (Vibrio cholerae serotype O1 (strain ATCC 39315 / El Tor Inaba N16961)).